The following is a 101-amino-acid chain: Small ribosomal subunit protein uS14 (101 aa).

It belongs to the universal ribosomal protein uS14 family. As to quaternary structure, part of the 30S ribosomal subunit. Contacts proteins S3 and S10.

Functionally, binds 16S rRNA, required for the assembly of 30S particles and may also be responsible for determining the conformation of the 16S rRNA at the A site. The polypeptide is Small ribosomal subunit protein uS14 (Alkalilimnicola ehrlichii (strain ATCC BAA-1101 / DSM 17681 / MLHE-1)).